Reading from the N-terminus, the 700-residue chain is MCRSLRYCVSHCLYTAMTRLEEANREVNMYSSVRYLGYLAQLSLLVAICMGLYVRWDQTDDSFILVIFILGLVIFAIASILYYYFSMEAASLSLCNLWFGFLLGLLCFIDSSTFQHDLKEEATKYLLVSSIIIKTLSALVERICGCVRHRPTLLTSSEFLELVGFAIASTIMLMQKSLSIILLVAALAMIIIDLRMKSFLSIAILVVFASLTPELFFRSLDIPVNPYALSCFFFCIISNPFLDVYFSGLSVTERWKPYLYRGRFCRRFSVISIGLIELVFFVFAALKLGDLHLWYFVIPGFSIFGIFWLICHIIFLITLWGFNTKLNECHKVYSTHRPDNNSLDRVMASKGMRHFCLISERLVFFSLLATIILGAVSWQSSNGLFISIFLIVLPLESMAHGLFHELGNCLGGTSIGYAVVIPTNFCSPNGQPMLLPPEHVEELNLRSTGMLNSIQRFFASHMIETYGCDYSTSGLNFDTLHSKLKSFLDLRTSDGPRHDTYIIYYTGHSHSTGEWALAGGETLRFETLLEWWREKNGSFCSRLIIVLDTESSQPWVKEVRRVGDQYVAVQGAEMARVVDIEEADPPQLGDFTKEWVEYNCNPDNNINWTEKGRTVKAVYAVSKPWSDYTLHLPTGNDVTKHWMTYFPHITYPLVHLANWCGALNMFWLCKICYKCLKRLKMNWFLPAVLDTGQGFKLVKS.

The next 8 membrane-spanning stretches (helical) occupy residues 36-56 (LGYL…YVRW), 63-83 (FILV…ILYY), 89-109 (AASL…LCFI), 171-191 (IMLM…AMII), 197-217 (KSFL…ELFF), 231-251 (CFFF…GLSV), 268-288 (FSVI…ALKL), and 297-317 (VIPG…IFLI). Asn-340 carries an N-linked (GlcNAc...) asparagine glycan. Helical transmembrane passes span 355–375 (FCLI…ILGA) and 383–403 (GLFI…HGLF). Residues Asn-536 and Asn-607 are each glycosylated (N-linked (GlcNAc...) asparagine).

It belongs to the TMEM168 family.

It is found in the nucleus membrane. Plays a key role in maintaining the cardiac electrical stability by modulating cell surface expression of SCN5A. The protein is Transmembrane protein 168 (tmem168) of Xenopus laevis (African clawed frog).